Reading from the N-terminus, the 170-residue chain is Urease accessory protein UreE (170 aa).

This sequence belongs to the UreE family.

It is found in the cytoplasm. Its function is as follows. Involved in urease metallocenter assembly. Binds nickel. Probably functions as a nickel donor during metallocenter assembly. The sequence is that of Urease accessory protein UreE from Helicobacter pylori (strain Shi470).